Reading from the N-terminus, the 931-residue chain is MKASSGRCGLVRWLQVLLPFLLSLFPGALPVQIRYSIPEELAKNSVVGNLAKDLGLSVRDLPARKLRVSAEKEYFTVNPESGDLLVSDRIDREQICGKQPLCVLDFDTVAENPLNIFYIAVIVQDINDNTPLFKQTKINLKIGESTKPGTTFPLDPALDSDVGPNSLQRYHLNDNEYFDLAEKQTPDGRKYPELILQHSLDREEHSLHQLVLTAVDGGDPPQSGTTQIRVKVTDANDNPPVFSQDVYRVTLREDVPPGFFVLQVTATDRDEGVNAEITYSFHNVDEQVKHFFNLNEKTGEITTKDDLDFEIASSYTLSIEAKDPGDLAAHCSIQVEILDDNDCAPEVIVTSVFTPLPEDSPPGTVIALIKTRDRDSGENGEVYCQVLGNAKFILKSSSKNYYKLVTDGALDREEIPEYNLTITATDGGKPPLSSSIIVTLHISDVNDNAPVFQQTSYMVHVAENNPPGASIAQISASDPDLGPNGQVSYSIVASDLKPREILSYVSVSAQSGVVFAQRAFDHEQLRAFELTLQARDQGSPALSANVSLRVLVGDLNDNAPRVLYPALGSDGSALFDMVPRAAEPGYLVTKVVAVDADSGHNAWLSYHVLQASEPGLFSLGLRTGEVRTARALGDRDAARQRLLVAVRDGGQPPLSATATLHLIFADSLQEVLPDLSDRPEPSDPQAELQFYLVVALALISVLFFLAVILAISLRLRRSSRSDAWDCFQPGLSSKPGPGVLPSYSEGTLPYSYNLCVASQSAKTEFNFLNITPELIPAQDLLCDNASWEQNTNHGAAGVPFASDTILKQAPPNTDWRFSQAQRPGTSGSQNGDDTGTWPNNQFDTEMLQAMILASASEAADGSSTLGGGAGTMGLSARYGPQFTLQHVPDYRQNVYIPGSNATLTNAAGKRDGKAPAGGNGNKKKSGKKEKK.

Residues 1-30 form the signal peptide; the sequence is MKASSGRCGLVRWLQVLLPFLLSLFPGALP. 6 Cadherin domains span residues 31–133, 134–242, 243–347, 348–452, 453–562, and 570–675; these read VQIR…TPLF, KQTK…PPVF, SQDV…APEV, IVTS…APVF, QQTS…APRV, and DGSA…LPDL. Residues 31 to 691 are Extracellular-facing; the sequence is VQIRYSIPEE…SDPQAELQFY (661 aa). N-linked (GlcNAc...) asparagine glycans are attached at residues N419 and N545. A helical transmembrane segment spans residues 692–712; sequence LVVALALISVLFFLAVILAIS. Residues 713–931 are Cytoplasmic-facing; the sequence is LRLRRSSRSD…KKKSGKKEKK (219 aa). 2 disordered regions span residues 814–840 and 901–931; these read DWRF…WPNN and ATLT…KEKK. Residues 815–840 are compositionally biased toward polar residues; it reads WRFSQAQRPGTSGSQNGDDTGTWPNN. Positions 921–931 are enriched in basic residues; that stretch reads NKKKSGKKEKK.

It localises to the cell membrane. Its function is as follows. Potential calcium-dependent cell-adhesion protein. May be involved in the establishment and maintenance of specific neuronal connections in the brain. This Pan troglodytes (Chimpanzee) protein is Protocadherin gamma-B2 (PCDHGB2).